The following is a 223-amino-acid chain: Glycolipid transfer protein 2 (223 aa).

4 residues coordinate a ganglioside GM3 (d18:1(4E)): Asp-69, Asn-73, Trp-116, and His-155.

This sequence belongs to the GLTP family.

Its function is as follows. Transfers glycolipids in vitro. This Arabidopsis thaliana (Mouse-ear cress) protein is Glycolipid transfer protein 2.